The primary structure comprises 218 residues: Ribose-5-phosphate isomerase A (218 aa).

Substrate contacts are provided by residues 28 to 31 (TGST), 81 to 84 (DGAD), and 94 to 97 (KGGG). Catalysis depends on glutamate 103, which acts as the Proton acceptor. Lysine 121 lines the substrate pocket.

Belongs to the ribose 5-phosphate isomerase family. Homodimer.

It catalyses the reaction aldehydo-D-ribose 5-phosphate = D-ribulose 5-phosphate. Its pathway is carbohydrate degradation; pentose phosphate pathway; D-ribose 5-phosphate from D-ribulose 5-phosphate (non-oxidative stage): step 1/1. Catalyzes the reversible conversion of ribose-5-phosphate to ribulose 5-phosphate. The polypeptide is Ribose-5-phosphate isomerase A (Vibrio campbellii (strain ATCC BAA-1116)).